The chain runs to 995 residues: UPF0182 protein MUL_2505 (995 aa).

7 consecutive transmembrane segments (helical) span residues 18–38, 63–83, 113–133, 175–195, 210–230, 259–279, and 287–307; these read VLIL…RLID, FLVF…GLAL, LFGI…AQSY, FVAI…FGGI, IQLV…YWLN, KLIL…AIVL, and IGLV…PMIV. Positions 900–947 are disordered; it reads AATGIQPTEGGAPANVPPNNAPSPEALPGTPPSPPTAVPPAPEASVTL. The segment covering 928-941 has biased composition (pro residues); the sequence is GTPPSPPTAVPPAP.

It belongs to the UPF0182 family.

It localises to the cell membrane. In Mycobacterium ulcerans (strain Agy99), this protein is UPF0182 protein MUL_2505.